The following is a 487-amino-acid chain: N-succinylglutamate 5-semialdehyde dehydrogenase (487 aa).

221 to 226 (GSSDTG) provides a ligand contact to NAD(+). Catalysis depends on residues glutamate 244 and cysteine 278.

Belongs to the aldehyde dehydrogenase family. AstD subfamily.

The enzyme catalyses N-succinyl-L-glutamate 5-semialdehyde + NAD(+) + H2O = N-succinyl-L-glutamate + NADH + 2 H(+). It functions in the pathway amino-acid degradation; L-arginine degradation via AST pathway; L-glutamate and succinate from L-arginine: step 4/5. In terms of biological role, catalyzes the NAD-dependent reduction of succinylglutamate semialdehyde into succinylglutamate. The sequence is that of N-succinylglutamate 5-semialdehyde dehydrogenase from Burkholderia mallei (strain ATCC 23344).